A 2183-amino-acid chain; its full sequence is DNA polymerase epsilon catalytic subunit A (2183 aa).

4 residues coordinate Zn(2+): cysteine 2066, cysteine 2069, cysteine 2090, and cysteine 2093. The CysA-type zinc finger occupies cysteine 2066–cysteine 2093. 4 residues coordinate [4Fe-4S] cluster: cysteine 2124, cysteine 2127, cysteine 2139, and cysteine 2141. Residues cysteine 2124–cysteine 2141 carry the CysB motif motif.

Belongs to the DNA polymerase type-B family. In terms of assembly, heterotetramer. Consists of 4 subunits: POL2, DPB2, DPB3 and DPB4. [4Fe-4S] cluster serves as cofactor.

It is found in the nucleus. It catalyses the reaction DNA(n) + a 2'-deoxyribonucleoside 5'-triphosphate = DNA(n+1) + diphosphate. In terms of biological role, DNA polymerase II participates in chromosomal DNA replication. The sequence is that of DNA polymerase epsilon catalytic subunit A (POL2) from Yarrowia lipolytica (strain CLIB 122 / E 150) (Yeast).